The sequence spans 315 residues: tRNA uridine(34) hydroxylase (315 aa).

A Rhodanese domain is found at 122-223 (SDPDVLVIDT…YLEQIPQPES (102 aa)). The Cysteine persulfide intermediate role is filled by cysteine 183.

This sequence belongs to the TrhO family.

The enzyme catalyses uridine(34) in tRNA + AH2 + O2 = 5-hydroxyuridine(34) in tRNA + A + H2O. Functionally, catalyzes oxygen-dependent 5-hydroxyuridine (ho5U) modification at position 34 in tRNAs. This Caulobacter vibrioides (strain ATCC 19089 / CIP 103742 / CB 15) (Caulobacter crescentus) protein is tRNA uridine(34) hydroxylase.